The following is a 66-amino-acid chain: Large ribosomal subunit protein uL29 (66 aa).

Belongs to the universal ribosomal protein uL29 family.

This chain is Large ribosomal subunit protein uL29, found in Ruegeria sp. (strain TM1040) (Silicibacter sp.).